A 367-amino-acid chain; its full sequence is MMMTAIGLMSGTSLDGVDVALIKTDGRHVAALGPSGYRPYTETERGLLRQALAEATGLDRRDARPGILAEAERAVTIAHAEAVAAFVAQNRITAGAIDIVGFHGQTVLHRPAAKLTVQIGDAQALAKAIRIPVMHDFRAADVAAGGQGAPFVPVYHRALAQSLGRDGPIVVVNIGGVSNVTYIDGNDALIACDTGPGNALLDDFVFRAIGKPFDCEGRLAAQGTADEGWIADALQHPFFAQRPPKSLDRNDFASLGLRDWSPADGAATLTAFTAGAIAAIVPLLPKPPTSFVITGGGARNLTMMRMLREQLEPARVESADALGWSADAMEAQAFGFLAARGLKGLPLSYPATTGVSFPMTGGLLARP.

Residue 11 to 18 (GTSLDGVD) coordinates ATP.

It belongs to the anhydro-N-acetylmuramic acid kinase family.

It carries out the reaction 1,6-anhydro-N-acetyl-beta-muramate + ATP + H2O = N-acetyl-D-muramate 6-phosphate + ADP + H(+). It participates in amino-sugar metabolism; 1,6-anhydro-N-acetylmuramate degradation. The protein operates within cell wall biogenesis; peptidoglycan recycling. Functionally, catalyzes the specific phosphorylation of 1,6-anhydro-N-acetylmuramic acid (anhMurNAc) with the simultaneous cleavage of the 1,6-anhydro ring, generating MurNAc-6-P. Is required for the utilization of anhMurNAc either imported from the medium or derived from its own cell wall murein, and thus plays a role in cell wall recycling. This is Anhydro-N-acetylmuramic acid kinase from Rhodopseudomonas palustris (strain HaA2).